We begin with the raw amino-acid sequence, 482 residues long: ATP synthase subunit beta (482 aa).

162-169 (GGAGVGKT) is an ATP binding site.

Belongs to the ATPase alpha/beta chains family. As to quaternary structure, F-type ATPases have 2 components, CF(1) - the catalytic core - and CF(0) - the membrane proton channel. CF(1) has five subunits: alpha(3), beta(3), gamma(1), delta(1), epsilon(1). CF(0) has four main subunits: a(1), b(1), b'(1) and c(9-12).

The protein localises to the cellular thylakoid membrane. It catalyses the reaction ATP + H2O + 4 H(+)(in) = ADP + phosphate + 5 H(+)(out). Functionally, produces ATP from ADP in the presence of a proton gradient across the membrane. The catalytic sites are hosted primarily by the beta subunits. In Nostoc sp. (strain PCC 7120 / SAG 25.82 / UTEX 2576), this protein is ATP synthase subunit beta.